Consider the following 299-residue polypeptide: Fluorinase (299 aa).

S-adenosyl-L-methionine is bound by residues Asp15, 20–22 (DDS), Tyr76, Ser157, Asp210, Asn215, 269–270 (SR), and 277–279 (RNA).

The protein belongs to the SAM hydrolase / SAM-dependent halogenase family.

It catalyses the reaction fluoride + S-adenosyl-L-methionine = 5'-deoxy-5'-fluoroadenosine + L-methionine. Its activity is regulated as follows. Activity is not severely affected by most metal ions (Mg(2+), Mn(2+), Co(2+) and Fe(2+)), but both Cu(2+) and Zn(2+) are strong inhibitors. In terms of biological role, catalyzes the formation of a C-F bond by combining S-adenosyl-L-methionine (SAM) and fluoride to generate 5'-fluoro-5'-deoxyadenosine (5'-FDA) and L-methionine. The polypeptide is Fluorinase (Actinopolyspora mzabensis).